Consider the following 517-residue polypeptide: Probable anion transporter 6, chloroplastic (517 aa).

The interval 51–73 (TERVRESKKLPPKDPIEDPKPQL) is disordered. Residues 52 to 70 (ERVRESKKLPPKDPIEDPK) are compositionally biased toward basic and acidic residues. Helical transmembrane passes span 130–150 (FGWS…GYAL), 170–190 (IGVF…GFMP), 229–249 (FVFG…PPII), 255–275 (ESVF…FQFL), 312–332 (SFFQ…GSWG), 352–372 (LTEA…VTSL), 397–417 (IAFV…GLPP), 420–440 (IVGI…GLYC), 452–472 (ILLG…VALT), and 484–504 (MSLF…WLAF).

Belongs to the major facilitator superfamily. Sodium/anion cotransporter (TC 2.A.1.14) family. As to expression, expressed in leaf veins and sepals.

The protein resides in the plastid. It is found in the chloroplast membrane. Functionally, inorganic phosphate and probable anion transporter. This chain is Probable anion transporter 6, chloroplastic (ANTR6), found in Arabidopsis thaliana (Mouse-ear cress).